The following is a 487-amino-acid chain: L-tartrate/succinate antiporter (487 aa).

14 helical membrane-spanning segments follow: residues 10–30 (YLAPLAVIAIIALLPLPAGLE), 33–53 (TWLYFAVFTGVIVGLILEPVP), 54–74 (GAVVAMVGISIIAILSPWLLF), 93–113 (WAVSGFSNSVIWLIFAAFMFG), 137–157 (TLFLGYAVMFSELILAPVTPS), 189–209 (IGSYIMWMGIVADCVTSAIFL), 236–256 (FLGMLPLSILLVLLVPWLAYV), 292–312 (LMVGALVLWIFGGDYIDAAMV), 313–333 (GYSVVALMLLLRIICWDDIVS), 340–360 (VFFWLASLITLATGLNNTGFI), 370–390 (SLSGYSPTIVMVALIVVFYLL), 393–413 (FFASATAYTSALAPMMIAAAL), 418–438 (IPLPVFCLMVGAAIGLGSILT), and 462–482 (LGAIFGLIFLVLLVITGLLWM).

The protein belongs to the SLC13A/DASS transporter (TC 2.A.47) family. DIT1 subfamily.

It localises to the cell inner membrane. It carries out the reaction (2R,3R)-tartrate(out) + succinate(in) = (2R,3R)-tartrate(in) + succinate(out). Its function is as follows. Catalyzes the uptake of tartrate in exchange for intracellular succinate. Essential for anaerobic L-tartrate fermentation. The chain is L-tartrate/succinate antiporter (ttdT) from Escherichia coli O6:H1 (strain CFT073 / ATCC 700928 / UPEC).